Consider the following 302-residue polypeptide: D-alanine--D-alanine ligase (302 aa).

Residues 100–294 (KALFRREGLL…FPELVEKLIQ (195 aa)) form the ATP-grasp domain. ATP is bound at residue 127 to 180 (GLNYPIFVKSNIGGSSVNVHLVTNYEELFIAMEALFNAGEEVLLEEAIIGQEVT). Mg(2+) contacts are provided by Asp248, Glu261, and Asn263.

Belongs to the D-alanine--D-alanine ligase family. Mg(2+) serves as cofactor. Mn(2+) is required as a cofactor.

It is found in the cytoplasm. It catalyses the reaction 2 D-alanine + ATP = D-alanyl-D-alanine + ADP + phosphate + H(+). It participates in cell wall biogenesis; peptidoglycan biosynthesis. Cell wall formation. The protein is D-alanine--D-alanine ligase of Lawsonia intracellularis (strain PHE/MN1-00).